Reading from the N-terminus, the 740-residue chain is Ribosome-releasing factor 2, mitochondrial (740 aa).

A mitochondrion-targeting transit peptide spans 1-29; that stretch reads MLKYAWQSGPKQSNRWLWHLSNQIWKRSY. The region spanning 31–310 is the tr-type G domain; it reads SKIRNIGILA…AVNAYLPAPE (280 aa). GTP is bound by residues 40 to 47, 104 to 108, and 158 to 161; these read AHIDAGKT, DTPGH, and NKMD.

This sequence belongs to the TRAFAC class translation factor GTPase superfamily. Classic translation factor GTPase family. EF-G/EF-2 subfamily.

The protein resides in the mitochondrion. Its function is as follows. Mitochondrial GTPase that mediates the disassembly of ribosomes from messenger RNA at the termination of mitochondrial protein biosynthesis. Not involved in the GTP-dependent ribosomal translocation step during translation elongation. In Drosophila melanogaster (Fruit fly), this protein is Ribosome-releasing factor 2, mitochondrial.